Here is a 59-residue protein sequence, read N- to C-terminus: Mitochondrial sheath formation-associated protein (59 aa).

The Mitochondrial intermembrane segment spans residues 1–6; sequence MIVLGW. The next 2 helical transmembrane spans lie at 2–22 and 7–23; these read IVLGWMFFVGLVCYMGTFPEL and MFFVGLVCYMGTFPELM. Topologically, residues 24–40 are cytoplasmic; that stretch reads PPTLKWQERWPVQESKT.

As to quaternary structure, interacts with VDAC3.

The protein resides in the mitochondrion outer membrane. Regulates sperm development. May be involved in mitochondrial sheath formation. The polypeptide is Mitochondrial sheath formation-associated protein (Homo sapiens (Human)).